The following is a 365-amino-acid chain: Flagellar P-ring protein (365 aa).

Residues 1–19 (MMLSLCAIAGLLLAPSIQA) form the signal peptide.

It belongs to the FlgI family. In terms of assembly, the basal body constitutes a major portion of the flagellar organelle and consists of four rings (L,P,S, and M) mounted on a central rod.

The protein resides in the periplasm. Its subcellular location is the bacterial flagellum basal body. Functionally, assembles around the rod to form the L-ring and probably protects the motor/basal body from shearing forces during rotation. This chain is Flagellar P-ring protein, found in Sodalis glossinidius (strain morsitans).